A 234-amino-acid polypeptide reads, in one-letter code: Large ribosomal subunit protein uL1 (234 aa).

The protein belongs to the universal ribosomal protein uL1 family. In terms of assembly, part of the 50S ribosomal subunit.

Its function is as follows. Binds directly to 23S rRNA. The L1 stalk is quite mobile in the ribosome, and is involved in E site tRNA release. In terms of biological role, protein L1 is also a translational repressor protein, it controls the translation of the L11 operon by binding to its mRNA. This is Large ribosomal subunit protein uL1 from Campylobacter fetus subsp. fetus (strain 82-40).